A 139-amino-acid chain; its full sequence is Small ribosomal subunit protein uS12 (139 aa).

The interval 119–139 (GVDKRRQQRSAYGAKKPKPKS) is disordered.

This sequence belongs to the universal ribosomal protein uS12 family. In terms of assembly, part of the 30S ribosomal subunit. Contacts proteins S8 and S17. May interact with IF1 in the 30S initiation complex.

Its function is as follows. With S4 and S5 plays an important role in translational accuracy. In terms of biological role, interacts with and stabilizes bases of the 16S rRNA that are involved in tRNA selection in the A site and with the mRNA backbone. Located at the interface of the 30S and 50S subunits, it traverses the body of the 30S subunit contacting proteins on the other side and probably holding the rRNA structure together. The combined cluster of proteins S8, S12 and S17 appears to hold together the shoulder and platform of the 30S subunit. In Mycoplasma genitalium (strain ATCC 33530 / DSM 19775 / NCTC 10195 / G37) (Mycoplasmoides genitalium), this protein is Small ribosomal subunit protein uS12.